The primary structure comprises 640 residues: MSRTLTPLLDRICLPQDLRALPESDLVRLADELRTETIDAVSVTGGHLGAGLGVVELTVALHYVFNTPEDRIIWDVGHQTYPHKILTGRRDRIRTLRQEGGLSGFTKRSESVYDPFGAGHSSTSISAGLGMTVASALKAEKRRNIIAVIGDGAMSAGMAYEAMNNAGALDARLIVILNDNDMSIAPPTGAMSAHLARLVSRPAYRSLRERIKMFSKKMPKFFLDKARRSEEFARGFLVGGTLFDELGFYYVGPIDGHNLKHLLPVLKNVREYPNGPVLVHVVTHKGKGYAPAEASSDKYHGVNSFDVVTGKQIKTQSNALAYTKVFSKALIEEATHDNKIVGITAAMPTGTGLDAFAEKFPERMFDVGIAEQHAVTFAAGMACEGYKPFVAIYSTFLQRAYDQVIHDVSIQKLPVRFAIDRAGFVGADGATHAGSFDIVFLATLPEFVVMAPSDEVELMHMVRTAAAYDQGPISFRYPRGEGVGMDLPQRGELLEIGKGRVLREGSRVALVCFGTRMSEVLVAADALIAEGLSTTVADARFAKPLDKDLMRRLACEHEVLVAVEEGAIGGFGAHLLQFLAKEGLLEHGLKVRTLKFPDEYLNHGSPEKVLSRIGLDAVGIVNTVFTALGREIRTVQKVRV.

Residues histidine 78 and 119–121 each bind thiamine diphosphate; that span reads GHS. Residue aspartate 151 participates in Mg(2+) binding. Residues 152–153, asparagine 180, tyrosine 289, and glutamate 371 each bind thiamine diphosphate; that span reads GA. Asparagine 180 serves as a coordination point for Mg(2+).

It belongs to the transketolase family. DXPS subfamily. Homodimer. Mg(2+) serves as cofactor. Thiamine diphosphate is required as a cofactor.

The enzyme catalyses D-glyceraldehyde 3-phosphate + pyruvate + H(+) = 1-deoxy-D-xylulose 5-phosphate + CO2. Its pathway is metabolic intermediate biosynthesis; 1-deoxy-D-xylulose 5-phosphate biosynthesis; 1-deoxy-D-xylulose 5-phosphate from D-glyceraldehyde 3-phosphate and pyruvate: step 1/1. Catalyzes the acyloin condensation reaction between C atoms 2 and 3 of pyruvate and glyceraldehyde 3-phosphate to yield 1-deoxy-D-xylulose-5-phosphate (DXP). The chain is 1-deoxy-D-xylulose-5-phosphate synthase from Bartonella quintana (strain Toulouse) (Rochalimaea quintana).